Consider the following 396-residue polypeptide: MAKAKFERNKPHVNIGTIGHVDHGKTTLTAAITTVLAQTGQAQAMNYASIDAAPEEKERGITINTAHVEYETENRHYAHVDCPGHADYVKNMITGAAQMDGAILVVSAADGPMPQTREHILLSKQVGVPYIVVFMNKCDMVDDEELLELVEMEIRDLLSQYEFPGDDTPVIKGSAKEALDNPTGEWAKKIGELMEAVDSYIPTPERATDKPFLMPVEDVFTITGRGTVATGRVERGIVKVGDQVEIIGLAEETKNTTVTGVEMFRKLLDQAQAGDNIGALLRGVDRNDIERGQCLAKPGSVKPYTKFKAEVYVLSKEEGGRHTPFFANYRPQFYFRTTDVTGIIQLPEGVEMIMPGDNTEFTVELIAPVAMEQGTRFAIREGGRTVGAGVVASIDA.

One can recognise a tr-type G domain in the interval 10–205; sequence KPHVNIGTIG…AVDSYIPTPE (196 aa). Residues 19 to 26 are G1; sequence GHVDHGKT. 19–26 is a GTP binding site; that stretch reads GHVDHGKT. Mg(2+) is bound at residue T26. Residues 60–64 form a G2 region; the sequence is GITIN. A G3 region spans residues 81 to 84; the sequence is DCPG. GTP contacts are provided by residues 81–85 and 136–139; these read DCPGH and NKCD. The tract at residues 136 to 139 is G4; it reads NKCD. A G5 region spans residues 174 to 176; the sequence is SAK.

It belongs to the TRAFAC class translation factor GTPase superfamily. Classic translation factor GTPase family. EF-Tu/EF-1A subfamily. As to quaternary structure, monomer.

The protein localises to the cytoplasm. The catalysed reaction is GTP + H2O = GDP + phosphate + H(+). Its function is as follows. GTP hydrolase that promotes the GTP-dependent binding of aminoacyl-tRNA to the A-site of ribosomes during protein biosynthesis. This Brevibacillus brevis (strain 47 / JCM 6285 / NBRC 100599) protein is Elongation factor Tu.